We begin with the raw amino-acid sequence, 352 residues long: uncharacterized protein (352 aa).

A disordered region spans residues Met-1–Arg-40. The segment covering Phe-8 to Pro-21 has biased composition (basic and acidic residues). The span at Gln-22 to Pro-36 shows a compositional bias: low complexity. The helical transmembrane segment at Met-317–Tyr-333 threads the bilayer.

It is found in the host cell membrane. This is an uncharacterized protein from Diadromus pulchellus idnoreovirus 1 (DpIRV-1).